A 122-amino-acid chain; its full sequence is Toxin CSTX-1 (122 aa).

A signal peptide spans 1–20 (MKVLIISAVLFITIFSNISA). Positions 21–47 (EIEDDFLEDESFEAEDIIPFFENEQAR) are excised as a propeptide. Intrachain disulfides connect Cys-49-Cys-64, Cys-56-Cys-73, Cys-63-Cys-91, and Cys-75-Cys-89. Residues 99–112 (AIETGLNIFRGLFK) form a predicted alpha-helix region. Residue Arg-108 is modified to Arginine amide; in CSTX-2a. Lysine amide; in omega-ctenitoxin-Cs1a is present on Lys-121.

Belongs to the neurotoxin 19 (CSTX) family. 04 (U1-Lctx) subfamily. In terms of assembly, monomer. Interacts with CSTX-13 (AC P83919) (Kd=430 nM), but does not interact with CSTX-9 (AC P58604). In terms of tissue distribution, expressed by the venom gland.

It is found in the secreted. It localises to the target cell membrane. Its function is as follows. Spider venom toxin that shows calcium channel blocking activity and exhibits cytolytic activity by affecting the outer leaflet curvature and/or pore formation across the membrane. It blocks L-type calcium channels (Cav1/CACNA1) in mammalian neurons at nanomolar concentrations. Furthermore, it produces a slow voltage-independent block of mid/low and high voltage-activated calcium channels in cockroach neurons. Potassium ions, histamine, M-ctenitoxin-Cs1a (AC P83619), CSTX-9 (AC P58604), and CSTX-13 (AC P83919) synergistically increase the insecticidal activity of this toxin. In vivo, it causes paralysis in blow flies and provokes death in drosophila. Functionally, blocks voltage-activated calcium channels (Cav). Does not induce cell membrane permeability increase when tested on Xenopus oocytes. No alpha-helical structures are detectable. Is 7-fold less neurotoxic than omega-ctenitoxin-Cs1a on drosophila flies. In terms of biological role, blocks voltage-activated calcium channels (Cav). Is 190-fold less neurotoxic than omega-ctenitoxin-Cs1a on drosophila flies. The chain is Toxin CSTX-1 from Cupiennius salei (American wandering spider).